The chain runs to 275 residues: Holocytochrome c-type synthase (275 aa).

Disordered regions lie at residues 1-59 (MGLS…KTNS) and 83-102 (KENL…PAPD). G2 carries N-myristoyl glycine lipidation. Positions 9–28 (AASTVQTSTPAASDHQTAAP) are enriched in polar residues. HRM repeat units follow at residues 31–36 (GCPMHE) and 41–46 (GCPVSA). Polar residues predominate over residues 48–59 (PSDSTCGSKTNS). The span at 91–102 (LMPPPNQTPAPD) shows a compositional bias: pro residues.

This sequence belongs to the cytochrome c-type heme lyase family.

Its subcellular location is the mitochondrion inner membrane. It is found in the membrane. The enzyme catalyses holo-[cytochrome c] = apo-[cytochrome c] + heme b. Lyase that catalyzes the covalent linking of the heme group to the cytochrome C apoprotein to produce the mature functional cytochrome. In Bos taurus (Bovine), this protein is Holocytochrome c-type synthase.